We begin with the raw amino-acid sequence, 65 residues long: Large ribosomal subunit protein bL35 (65 aa).

Residues 1 to 15 show a composition bias toward basic residues; it reads MPKMKTKKSAAKRFQ. The disordered stretch occupies residues 1–26; it reads MPKMKTKKSAAKRFQVRGSGSIKRGQ.

It belongs to the bacterial ribosomal protein bL35 family.

The protein is Large ribosomal subunit protein bL35 of Bordetella avium (strain 197N).